The primary structure comprises 321 residues: Citrate synthase (321 aa).

Catalysis depends on residues H248 and D306.

The protein belongs to the citrate synthase family.

It catalyses the reaction oxaloacetate + acetyl-CoA + H2O = citrate + CoA + H(+). It functions in the pathway carbohydrate metabolism; tricarboxylic acid cycle; isocitrate from oxaloacetate: step 1/2. This is Citrate synthase (gltA) from Bartonella elizabethae (Rochalimaea elizabethae).